The primary structure comprises 269 residues: Bis(5'-nucleosyl)-tetraphosphatase, symmetrical (269 aa).

It belongs to the Ap4A hydrolase family.

It carries out the reaction P(1),P(4)-bis(5'-adenosyl) tetraphosphate + H2O = 2 ADP + 2 H(+). Its function is as follows. Hydrolyzes diadenosine 5',5'''-P1,P4-tetraphosphate to yield ADP. The polypeptide is Bis(5'-nucleosyl)-tetraphosphatase, symmetrical (Vibrio vulnificus (strain CMCP6)).